The sequence spans 236 residues: Syntaxin-8 (236 aa).

At 1–215 (MAPDPWFSTY…LVDRKSTSCG (215 aa)) the chain is on the cytoplasmic side. Residues 42-65 (VTIRALLQKLKEKIALLKDLLLRA) adopt a coiled-coil conformation. The region spanning 145–207 (QKIIQEQDAG…RTETRRVNLV (63 aa)) is the t-SNARE coiled-coil homology domain. Ser160 carries the post-translational modification Phosphoserine. A helical; Anchor for type IV membrane protein membrane pass occupies residues 216 to 232 (MIMVILLLLVAIVVVAV). The Vesicular segment spans residues 233 to 236 (WPTK).

Belongs to the syntaxin family. In terms of assembly, forms a SNARE complex with STX7, VTI1B and VAMP8 which functions in the homotypic fusion of late endosomes. Part of the SNARE core complex containing STX7, VAMP8 and VTI1B. Interacts with VAMP8. Interacts with HECTD3. Interacts with TPC1. In terms of processing, ubiquitinated by HECTD3.

The protein resides in the membrane. In terms of biological role, vesicle trafficking protein that functions in the early secretory pathway, possibly by mediating retrograde transport from cis-Golgi membranes to the ER. The polypeptide is Syntaxin-8 (STX8) (Bos taurus (Bovine)).